The sequence spans 215 residues: MKIWTSEHIFNHPWETVTQAAWRKYPNPMTPSIIGTDVVERRVVDGVLHTHRLVQSKWYFPKWTHALIGTAKTCFASERSTVDPERKQMVLKTNNLTFCRNISVDEVLYYEPHPSDASKTLLKQEATVTVFGVPLSHYMEDLLTSTISTNAGKGRQGLEWVIGLINTEVKGIARGTDELLHNTRRSIDEVTESARKSMDEISAQAAKAAKAMHIT.

The PRELI/MSF1 domain maps to 1 to 170; the sequence is MKIWTSEHIF…VIGLINTEVK (170 aa).

The protein belongs to the slowmo family. In terms of tissue distribution, expressed in specific tissues such as the developing central nervous system (CNS) and both the male and female germline. In the CNS, it is restricted in a subset of cells during embryogenesis and early larval development. In embryos, it is also expressed in salivary glands. In the testis, expressed in somatic cyst cells throughout the distal region where the mitotic cysts develop, extending through to meiotic cysts.

It is found in the mitochondrion. Required to regulate peristaltic movement and also for germline proliferation in males and females. The chain is Protein slowmo (slmo) from Drosophila melanogaster (Fruit fly).